A 203-amino-acid chain; its full sequence is Nucleoside triphosphate pyrophosphatase (203 aa).

Asp-77 serves as the catalytic Proton acceptor.

The protein belongs to the Maf family. Requires a divalent metal cation as cofactor.

It is found in the cytoplasm. The enzyme catalyses a ribonucleoside 5'-triphosphate + H2O = a ribonucleoside 5'-phosphate + diphosphate + H(+). It catalyses the reaction a 2'-deoxyribonucleoside 5'-triphosphate + H2O = a 2'-deoxyribonucleoside 5'-phosphate + diphosphate + H(+). Functionally, nucleoside triphosphate pyrophosphatase. May have a dual role in cell division arrest and in preventing the incorporation of modified nucleotides into cellular nucleic acids. The polypeptide is Nucleoside triphosphate pyrophosphatase (Rickettsia felis (strain ATCC VR-1525 / URRWXCal2) (Rickettsia azadi)).